The primary structure comprises 391 residues: Pyoverdine export membrane fusion protein PvdR (391 aa).

Positions 1–24 (MRRTRSTRRALLVAVCLSPLIALA) are cleaved as a signal peptide. A coiled-coil region spans residues 108–180 (IEMLKAQLAE…QASLRSDEAE (73 aa)). The interval 263 to 289 (LPVPPKPLDQSNQGGGSPTSGSGGQSG) is disordered. Residues 275–289 (QGGGSPTSGSGGQSG) are compositionally biased toward gly residues.

Belongs to the membrane fusion protein (MFP) (TC 8.A.1) family. Part of the tripartite efflux system PvdRT-OpmQ, which is composed of an inner membrane component with both ATPase and permease domains, PvdT, a periplasmic membrane fusion protein, PvdR, and an outer membrane component, OpmQ.

Its subcellular location is the periplasm. Its function is as follows. Part of the tripartite efflux system PvdRT-OpmQ required for the secretion into the extracellular milieu of the siderophore pyoverdine (PVD), which is involved in iron acquisition. This subunit is an adapter protein that stimulates the ATPase activity of PvdT and connects the inner and outer membrane components. The system is responsible for export of newly synthesized PVD after the final steps of biosynthesis have taken place in the periplasm. It is also responsible for recycling of PVD after internalization of ferri-PVD into the periplasm by the outer-membrane receptor FpvA and release of iron from PVD, thus making PVD available for new cycles of iron uptake. In addition, can expel unwanted metals complexed with PVD from the periplasm into the extracellular medium. Does not contribute to resistance to antibiotics belonging to the classes of tetracyclines, aminoglycosides, beta-lactams and macrolides, and chloramphenicol. The sequence is that of Pyoverdine export membrane fusion protein PvdR from Pseudomonas aeruginosa (strain ATCC 15692 / DSM 22644 / CIP 104116 / JCM 14847 / LMG 12228 / 1C / PRS 101 / PAO1).